A 377-amino-acid chain; its full sequence is Trans-enoyl reductase FMN2 (377 aa).

Residues 7–370 (NASGGYCLNS…DGVIRGKKLV (364 aa)) form the Enoyl reductase (ER) domain. The tract at residues 143–173 (LSDMTGNGRSNGYTNGHTNGHTNGHSKGEEE) is disordered. Positions 144–155 (SDMTGNGRSNGY) are enriched in polar residues. Residues 156–167 (TNGHTNGHTNGH) are compositionally biased toward low complexity. NADP(+) contacts are provided by residues 186 to 189 (ASAS), 209 to 212 (SPAN), Y227, and 274 to 275 (LD).

It belongs to the zinc-containing alcohol dehydrogenase family.

It participates in secondary metabolite biosynthesis. Trans-enoyl reductase; part of the gene cluster that mediates the biosynthesis of fusamarins, isocoumarin derivatives that show moderate cytotoxicity with IC(50) values between 1 and 50 uM. The polyketide synthase FMN1 probably synthesizes two different polyketides, a tetra- and a pentaketide, containinga varying number of double bonds depending on the selective actions of the trans-enoyl reductase FMN2. Chain fusion will presumably be mediated by the KS domain before finally offloading is catalyzed by the alpha/beta hydrolase fold enzyme FMN3. The chain is Trans-enoyl reductase FMN2 from Fusarium mangiferae (Mango malformation disease fungus).